An 878-amino-acid chain; its full sequence is von Willebrand factor A domain-containing protein DDB_G0267758 (878 aa).

Positions 36 to 169 (GLFLTENNKK…TVKITLTITS (134 aa)) constitute a VIT domain. Residues 316–496 (EFIFLIDCSG…ISLKPMFSNI (181 aa)) enclose the VWFA domain. A compositionally biased stretch (low complexity) spans 595-623 (SSSSSSSSSSSSSSSSSSSSSSSSSSSSS). Disordered stretches follow at residues 595 to 638 (SSSS…HRLS) and 752 to 774 (SVKKSKKSETKEETTKTTSSKTK). Polar residues predominate over residues 624-635 (TTTATTNQNQIH).

The sequence is that of von Willebrand factor A domain-containing protein DDB_G0267758 from Dictyostelium discoideum (Social amoeba).